Reading from the N-terminus, the 310-residue chain is Beta-ketoacyl-[acyl-carrier-protein] synthase III (310 aa).

Catalysis depends on residues cysteine 112 and histidine 235. The interval 236–240 is ACP-binding; that stretch reads QANIR. The active site involves asparagine 265.

Belongs to the thiolase-like superfamily. FabH family. As to quaternary structure, homodimer.

It is found in the cytoplasm. The catalysed reaction is malonyl-[ACP] + acetyl-CoA + H(+) = 3-oxobutanoyl-[ACP] + CO2 + CoA. It participates in lipid metabolism; fatty acid biosynthesis. Catalyzes the condensation reaction of fatty acid synthesis by the addition to an acyl acceptor of two carbons from malonyl-ACP. Catalyzes the first condensation reaction which initiates fatty acid synthesis and may therefore play a role in governing the total rate of fatty acid production. Possesses both acetoacetyl-ACP synthase and acetyl transacylase activities. Its substrate specificity determines the biosynthesis of branched-chain and/or straight-chain of fatty acids. The protein is Beta-ketoacyl-[acyl-carrier-protein] synthase III of Geobacillus kaustophilus (strain HTA426).